We begin with the raw amino-acid sequence, 594 residues long: MGHCYSRNISAVEDDEIPTGNGEVSNQPSQNHRHASIPQSPVASGTPEVNSYNISPFQSPLPAGVAPSPARTPGRKFKWPFPPPSPAKPIMAALRRRRGAPPQPRDEPIPEDSEDVVDHGGDSGGGERLDKNFGFGKNFEGKYELGKEVGRGHFGHTCWAKAKKGKMKNQTVAVKIISKAKMTSTLSIEDVRREVKLLKALSGHRHMVKFYDVYEDADNVFVVMELCEGGELLDRILARGGRYPEVDAKRILVQILSATAFFHLQGVVHRDLKPENFLFTSRNEDAILKVIDFGLSDFIRYDQRLNDVVGSAYYVAPEVLHRSYSTEADMWSIGVISYILLCGSRPFYGRTESAIFRCVLRANPNFEDMPWPSISPTAKDFVKRLLNKDHRKRMTAAQALAHPWLRDENPGLLLDFSVYKLVKSYIRASPFRRSALKALSKAIPDEELVFLKAQFMLLDPKDGGLSLNCFTMALTRYATDAMMESRLPDILNTMQPLAQKKLDFEEFCAAAVSVYQLEALEEWEQIATSAFEHFEHEGNRIISVQELAGEMSVGPSAYPLLKDWIRSSDGKLSFLGYAKFLHGVTVRSSSSRPR.

A disordered region spans residues 1 to 131 (MGHCYSRNIS…DSGGGERLDK (131 aa)). Gly-2 is lipidated: N-myristoyl glycine. The segment covering 37-58 (IPQSPVASGTPEVNSYNISPFQ) has biased composition (polar residues). Residues 116–131 (VVDHGGDSGGGERLDK) show a composition bias toward basic and acidic residues. In terms of domain architecture, Protein kinase spans 143–405 (YELGKEVGRG…AAQALAHPWL (263 aa)). Residues 149-157 (VGRGHFGHT) and Lys-175 contribute to the ATP site. Asp-271 serves as the catalytic Proton acceptor. Ser-311 carries the phosphoserine modification. The interval 409-439 (NPGLLLDFSVYKLVKSYIRASPFRRSALKAL) is autoinhibitory domain. The tract at residues 428–448 (ASPFRRSALKALSKAIPDEEL) is calmodulin binding (CaMBD). 4 EF-hand domains span residues 446-481 (EELV…ATDA), 482-517 (MMES…VYQL), 518-557 (EALE…GPSA), and 558-587 (YPLL…VTVR). Residues Asp-462, Lys-501, Glu-506, Asn-539, Glu-546, Ser-567, Asp-569, and Lys-571 each coordinate Ca(2+). Ser-573 bears the Phosphoserine mark.

Belongs to the protein kinase superfamily. Ser/Thr protein kinase family. CDPK subfamily. As to quaternary structure, binds calmodulin (CaM) in a calcium-dependent manner. Autophosphorylated.

It is found in the cell membrane. It carries out the reaction L-seryl-[protein] + ATP = O-phospho-L-seryl-[protein] + ADP + H(+). It catalyses the reaction L-threonyl-[protein] + ATP = O-phospho-L-threonyl-[protein] + ADP + H(+). Its activity is regulated as follows. Activated by calcium and calmodulin. Autophosphorylation may play an important role in the regulation of the kinase activity. Functionally, may play a role in signal transduction pathways that involve calcium as a second messenger. This is CDPK-related kinase 4 (CRK4) from Arabidopsis thaliana (Mouse-ear cress).